The primary structure comprises 141 residues: HTH-type transcriptional repressor NsrR (141 aa).

In terms of domain architecture, HTH rrf2-type spans 2-129 (QLTSFTDYGL…DQYTLADMVK (128 aa)). Positions 28–51 (ISEVTEVYGVSRNHMVKIINQLSR) form a DNA-binding region, H-T-H motif. [2Fe-2S] cluster is bound by residues Cys91, Cys96, and Cys102.

[2Fe-2S] cluster serves as cofactor.

Functionally, nitric oxide-sensitive repressor of genes involved in protecting the cell against nitrosative stress. May require iron for activity. This chain is HTH-type transcriptional repressor NsrR, found in Pectobacterium atrosepticum (strain SCRI 1043 / ATCC BAA-672) (Erwinia carotovora subsp. atroseptica).